The following is a 348-amino-acid chain: Fe-S cluster assembly protein DRE2 (348 aa).

Positions 1–185 are N-terminal SAM-like domain; that stretch reads MSGEKSSLLL…KKPESPRASV (185 aa). Disordered regions lie at residues 128 to 148 and 162 to 213; these read QTAP…SKSL and KKAE…TASK. The segment at 186-241 is linker; the sequence is VAEDLDDGDELDGMNEDDSNSDELTASKSKFFDDVAGQDSADSIDEDDLVDDAEKS. Positions 188-206 are enriched in acidic residues; that stretch reads EDLDDGDELDGMNEDDSNS. Positions 248, 259, 262, and 264 each coordinate [2Fe-2S] cluster. The fe-S binding site A stretch occupies residues 248 to 264; sequence CGKTKTRRRKACKDCTC. Residues C311, C314, C322, and C325 each coordinate [4Fe-4S] cluster. 2 consecutive short sequence motifs (cx2C motif) follow at residues 311 to 314 and 322 to 325; these read CGSC and CSGC. A fe-S binding site B region spans residues 311-325; sequence CGSCSLGDAFRCSGC.

The protein belongs to the anamorsin family. In terms of assembly, monomer. Interacts with TAH18. Interacts with MIA40. [2Fe-2S] cluster is required as a cofactor. [4Fe-4S] cluster serves as cofactor.

The protein resides in the cytoplasm. It localises to the mitochondrion intermembrane space. In terms of biological role, component of the cytosolic iron-sulfur (Fe-S) protein assembly (CIA) machinery required for the maturation of extramitochondrial Fe-S proteins. Part of an electron transfer chain functioning in an early step of cytosolic Fe-S biogenesis, facilitating the de novo assembly of a [4Fe-4S] cluster on the scaffold complex CFD1-NBP35. Electrons are transferred to DRE2 from NADPH via the FAD- and FMN-containing protein TAH18. TAH18-DRE2 are also required for the assembly of the diferric tyrosyl radical cofactor of ribonucleotide reductase (RNR), probably by providing electrons for reduction during radical cofactor maturation in the catalytic small subunit RNR2. The chain is Fe-S cluster assembly protein DRE2 from Lachancea thermotolerans (strain ATCC 56472 / CBS 6340 / NRRL Y-8284) (Yeast).